Here is a 229-residue protein sequence, read N- to C-terminus: ATP synthase subunit a (229 aa).

6 consecutive transmembrane segments (helical) span residues 16–36, 81–101, 110–130, 142–162, 175–195, and 196–216; these read YAHVATLGIATVAAVGIGAAA, YIPFFASVFFFILFNNLLGMI, NMNTTFGFGVLMFLFYNFQGV, FMGPVIFLAPLMFVIEIVSHI, VMMGDHTVLSVFLDLVPIGVP, and IPFYVMGLFVCFVQAFVFTLL.

It belongs to the ATPase A chain family. F-type ATPases have 2 components, CF(1) - the catalytic core - and CF(0) - the membrane proton channel. CF(1) has five subunits: alpha(3), beta(3), gamma(1), delta(1), epsilon(1). CF(0) has three main subunits: a(1), b(2) and c(9-12). The alpha and beta chains form an alternating ring which encloses part of the gamma chain. CF(1) is attached to CF(0) by a central stalk formed by the gamma and epsilon chains, while a peripheral stalk is formed by the delta and b chains.

Its subcellular location is the cell inner membrane. Its function is as follows. Key component of the proton channel; it plays a direct role in the translocation of protons across the membrane. The protein is ATP synthase subunit a of Bdellovibrio bacteriovorus (strain ATCC 15356 / DSM 50701 / NCIMB 9529 / HD100).